Here is a 158-residue protein sequence, read N- to C-terminus: Endoribonuclease YbeY (158 aa).

Zn(2+)-binding residues include His-117, His-121, and His-127.

The protein belongs to the endoribonuclease YbeY family. Zn(2+) serves as cofactor.

It localises to the cytoplasm. Single strand-specific metallo-endoribonuclease involved in late-stage 70S ribosome quality control and in maturation of the 3' terminus of the 16S rRNA. In Buchnera aphidicola subsp. Schizaphis graminum (strain Sg), this protein is Endoribonuclease YbeY.